The sequence spans 324 residues: tRNA N6-adenosine threonylcarbamoyltransferase (324 aa).

Fe cation is bound by residues H107, H111, and Y127. Residues 127–131 (YVSGG), D159, G172, E176, and N257 each bind substrate. D285 is a binding site for Fe cation.

Belongs to the KAE1 / TsaD family. Monomer. Component of the KEOPS complex that consists of Kae1, Bud32, Cgi121 and Pcc1; the whole complex dimerizes. Fe(2+) serves as cofactor.

The protein localises to the cytoplasm. The enzyme catalyses L-threonylcarbamoyladenylate + adenosine(37) in tRNA = N(6)-L-threonylcarbamoyladenosine(37) in tRNA + AMP + H(+). In terms of biological role, required for the formation of a threonylcarbamoyl group on adenosine at position 37 (t(6)A37) in tRNAs that read codons beginning with adenine. Is a component of the KEOPS complex that is probably involved in the transfer of the threonylcarbamoyl moiety of threonylcarbamoyl-AMP (TC-AMP) to the N6 group of A37. Kae1 likely plays a direct catalytic role in this reaction, but requires other protein(s) of the complex to fulfill this activity. This chain is tRNA N6-adenosine threonylcarbamoyltransferase, found in Pyrococcus furiosus (strain ATCC 43587 / DSM 3638 / JCM 8422 / Vc1).